The chain runs to 206 residues: Max dimerization protein 3 (206 aa).

The segment at 8–25 (IQVLLQAAEFLERREREA) is interaction with SIN3A and SIN3B. Disordered regions lie at residues 29–66 (YASLCPHHSPGTVCRRRKPPLQAPGALNSGRSVHNELE) and 122–171 (KLRS…QEDL). The region spanning 57–109 (SGRSVHNELEKRRRAQLKRCLEQLRQQMPLGVDCTRYTTLSLLRRARVHIQKL) is the bHLH domain. The segment covering 126–138 (KQQSLQQQLEQLQ) has biased composition (low complexity). A compositionally biased stretch (basic and acidic residues) spans 143–153 (ARERERLRADS).

Efficient DNA binding requires dimerization with another bHLH protein. Binds DNA as a heterodimer with MAX. Interacts with SIN3A AND SIN3B. Interacts with RNF17. As to expression, expressed only in the proliferating areas of the testis and thymus.

It localises to the nucleus. Functionally, transcriptional repressor. Binds with MAX to form a sequence-specific DNA-binding protein complex which recognizes the core sequence 5'-CAC[GA]TG-3'. Antagonizes MYC transcriptional activity by competing for MAX and suppresses MYC dependent cell transformation. This Mus musculus (Mouse) protein is Max dimerization protein 3 (Mxd3).